We begin with the raw amino-acid sequence, 116 residues long: Ferredoxin (116 aa).

2 4Fe-4S ferredoxin-type domains span residues 2-31 (TYVVTDECVKCKYTDCVEVCPVDCFYEGER) and 35-64 (FMLVINPDECIDCGVCVPDCPIGAIKPESP). Positions 9 and 17 each coordinate [3Fe-4S] cluster. The [4Fe-4S] cluster site is built by Cys-21, Cys-44, Cys-47, and Cys-50. Cys-54 is a binding site for [3Fe-4S] cluster.

The cofactor is [4Fe-4S] cluster. [3Fe-4S] cluster serves as cofactor.

Functionally, ferredoxins are iron-sulfur proteins that transfer electrons in a wide variety of metabolic reactions. In Rickettsia conorii (strain ATCC VR-613 / Malish 7), this protein is Ferredoxin (fdxA).